We begin with the raw amino-acid sequence, 156 residues long: Ribosomal RNA large subunit methyltransferase H (156 aa).

S-adenosyl-L-methionine is bound by residues Leu-72, Gly-104, and 123–128 (LGKMVW).

This sequence belongs to the RNA methyltransferase RlmH family. Homodimer.

Its subcellular location is the cytoplasm. The enzyme catalyses pseudouridine(1915) in 23S rRNA + S-adenosyl-L-methionine = N(3)-methylpseudouridine(1915) in 23S rRNA + S-adenosyl-L-homocysteine + H(+). In terms of biological role, specifically methylates the pseudouridine at position 1915 (m3Psi1915) in 23S rRNA. This Roseobacter denitrificans (strain ATCC 33942 / OCh 114) (Erythrobacter sp. (strain OCh 114)) protein is Ribosomal RNA large subunit methyltransferase H.